Here is a 177-residue protein sequence, read N- to C-terminus: Late embryogenesis abundant protein 1 (177 aa).

The interval 1-177 (MASHDQSYKA…DKDHFPTNRH (177 aa)) is disordered. Residues 28–39 (IEDKAQAAKEKA) show a composition bias toward basic and acidic residues. Low complexity predominate over residues 40–89 (QQAAQTAKDKTSQTAQAAKEKTQQTAQAAKEKTQQTAQAAKDETQQTAQA). 4 consecutive repeat copies span residues 53–63 (TAQAAKEKTQQ), 64–74 (TAQAAKEKTQQ), 75–85 (TAQAAKDETQQ), and 86–96 (TAQAAKDKTQQ). The tract at residues 53 to 96 (TAQAAKEKTQQTAQAAKEKTQQTAQAAKDETQQTAQAAKDKTQQ) is 4 X 11 AA approximate tandem repeats of T-A-Q-A-A-K-E-K-T-Q-Q. Basic and acidic residues predominate over residues 90-117 (AKDKTQQTTEATKEKAQDTTGRAREKGS). Residues 119–142 (MGQSTKETAQSGKDNSAGFLQQTG) are compositionally biased toward polar residues. Basic and acidic residues predominate over residues 164-177 (NDDKDKDHFPTNRH).

Belongs to the LEA type 4 family. As to expression, highest expression is found in seeds. No expression detected in adult tissues.

This chain is Late embryogenesis abundant protein 1, found in Cicer arietinum (Chickpea).